Reading from the N-terminus, the 312-residue chain is Olfactory receptor 51B5 (312 aa).

The Extracellular segment spans residues 1 to 23; that stretch reads MSSSGSSHPFLLTGFPGLEEAHH. A helical transmembrane segment spans residues 24 to 44; it reads WISVFFLFMYISILFGNGTLL. Over 45–52 the chain is Cytoplasmic; the sequence is LLIKEDHN. The chain crosses the membrane as a helical span at residues 53 to 73; the sequence is LHEPMYFFLAMLAATDLGLAL. Topologically, residues 74-97 are extracellular; it reads TTMPTVLGVLWLDHREIGSAACFS. A disulfide bond links Cys-95 and Cys-187. The chain crosses the membrane as a helical span at residues 98–118; sequence QAYFIHSLSFLESGILLAMAY. At 119–137 the chain is on the cytoplasmic side; the sequence is DRFIAICNPLRYTSVLTNT. The helical transmembrane segment at 138 to 158 threads the bilayer; that stretch reads RVVKIGLGVLMRGFVSVVPPI. Topologically, residues 159-194 are extracellular; that stretch reads RPLYFFLYCHSHVLSHAFCLHQDVIKLACADTTFNR. The chain crosses the membrane as a helical span at residues 195–215; it reads LYPAVLVVFIFVLDYLIIFIS. The Cytoplasmic portion of the chain corresponds to 216-235; sequence YVLILKTVLSIASREERAKA. Residues 236 to 256 form a helical membrane-spanning segment; it reads LITCVSHICCVLVFYVTVIGL. The Extracellular portion of the chain corresponds to 257-271; sequence SLIHRFGKQVPHIVH. A helical transmembrane segment spans residues 272 to 292; the sequence is LIMSYAYFLFPPLMNPITYSV. Residues 293-312 are Cytoplasmic-facing; it reads KTKQIQNAILHLFTTHRIGT.

This sequence belongs to the G-protein coupled receptor 1 family.

The protein localises to the cell membrane. Its function is as follows. Odorant receptor. This chain is Olfactory receptor 51B5 (OR51B5), found in Homo sapiens (Human).